We begin with the raw amino-acid sequence, 122 residues long: Large ribosomal subunit protein uL18 (122 aa).

It belongs to the universal ribosomal protein uL18 family. Part of the 50S ribosomal subunit; part of the 5S rRNA/L5/L18/L25 subcomplex. Contacts the 5S and 23S rRNAs.

This is one of the proteins that bind and probably mediate the attachment of the 5S RNA into the large ribosomal subunit, where it forms part of the central protuberance. This chain is Large ribosomal subunit protein uL18, found in Geotalea uraniireducens (strain Rf4) (Geobacter uraniireducens).